A 428-amino-acid chain; its full sequence is Trigger factor (428 aa).

One can recognise a PPIase FKBP-type domain in the interval 163-248; the sequence is GNIAVIDFKG…VKEIKVKELP (86 aa).

Belongs to the FKBP-type PPIase family. Tig subfamily.

The protein localises to the cytoplasm. The catalysed reaction is [protein]-peptidylproline (omega=180) = [protein]-peptidylproline (omega=0). In terms of biological role, involved in protein export. Acts as a chaperone by maintaining the newly synthesized protein in an open conformation. Functions as a peptidyl-prolyl cis-trans isomerase. This is Trigger factor from Clostridium perfringens (strain ATCC 13124 / DSM 756 / JCM 1290 / NCIMB 6125 / NCTC 8237 / Type A).